The following is a 106-amino-acid chain: Protamine (106 aa).

Residues 1–106 (ARAVRRRRAR…TRRRRRRARR (106 aa)) are disordered.

Sperm.

It is found in the nucleus. Its subcellular location is the chromosome. The protein is Protamine of Phorcus turbinatus (Sea snail).